Here is a 1406-residue protein sequence, read N- to C-terminus: Receptor-type tyrosine-protein phosphatase eta (1406 aa).

A signal peptide spans 1 to 24 (MRRLPLLPPCPLLLLLLLPAEVRC). The Extracellular portion of the chain corresponds to 25 to 1044 (TTACTDDCSL…LPQDPGVIAG (1020 aa)). Asn36, Asn52, Asn97, Asn103, Asn118, Asn124, Asn186, Asn192, Asn243, Asn275, Asn281, Asn296, Asn302, Asn331, Asn332, Asn364, Asn385, Asn391, Asn453, Asn459, Asn484, Asn500, Asn510, Asn547, Asn568, Asn630, Asn636, Asn651, Asn657, Asn719, Asn745, Asn750, Asn766, Asn776, Asn804, and Asn828 each carry an N-linked (GlcNAc...) asparagine glycan. Residues 39 to 72 (EEMGTSSNDELSVNATSGNRRLSEDVSLPGRAMS) form a disordered region. Residues 41 to 58 (MGTSSNDELSVNATSGNR) show a composition bias toward polar residues. 10 Fibronectin type-III domains span residues 82 to 170 (AVLD…TKPS), 171 to 259 (PVLD…TKPS), 260 to 343 (PVLD…SLNL), 346 to 437 (KPSP…TKPS), 438 to 523 (PVLD…SLYT), 524 to 614 (KPTP…TKPR), 615 to 703 (AVLH…TKPS), 704 to 793 (MVLN…VPSS), 794 to 888 (VNAF…TDPP), and 887 to 979 (PPVP…IVDV). The N-linked (GlcNAc...) asparagine glycan is linked to Asn1010. A helical membrane pass occupies residues 1045–1065 (AVIGCLLAILAVVAIGGYIFW). Topologically, residues 1066–1406 (RRRRKDKRNT…AFGKANGYHA (341 aa)) are cytoplasmic. Residues 1110-1367 (FAEEYEELKS…VFLNQCVMDI (258 aa)) enclose the Tyrosine-protein phosphatase domain. Residues Asp1274, 1308–1314 (CSAGVGR), and Gln1352 each bind substrate. Cys1308 functions as the Phosphocysteine intermediate in the catalytic mechanism.

It belongs to the protein-tyrosine phosphatase family. Receptor class 3 subfamily. In terms of tissue distribution, found on the apical surfaces of retinal Mueller cells, renal tubule cells and intestinal brush border cells.

The protein resides in the cell membrane. It is found in the cell projection. The protein localises to the ruffle membrane. It localises to the cell junction. It catalyses the reaction O-phospho-L-tyrosyl-[protein] + H2O = L-tyrosyl-[protein] + phosphate. Its function is as follows. Tyrosine phosphatase which dephosphorylates or contributes to the dephosphorylation of several substrates. Plays a role in cell adhesion, migration, proliferation and differentiation. Has a role in megakaryocytes and platelet formation. May influence the potential of nonsensory supporting cells to either proliferate or differentiate into hair cells. This chain is Receptor-type tyrosine-protein phosphatase eta (PTPRJ), found in Gallus gallus (Chicken).